A 483-amino-acid polypeptide reads, in one-letter code: Threonine synthase-like 2 (483 aa).

Lys113 carries the post-translational modification N6-(pyridoxal phosphate)lysine.

This sequence belongs to the threonine synthase family. Requires pyridoxal 5'-phosphate as cofactor.

Its function is as follows. Acts as a catabolic phospho-lyase on both gamma- and beta-phosphorylated substrates. Degrades O-phospho-threonine (PThr) to alpha-ketobutyrate, ammonia and phosphate. Also degrades O-phospho-homoserine (PHS), but this is not its physiological substrate. The chain is Threonine synthase-like 2 (Thnsl2) from Mus musculus (Mouse).